Reading from the N-terminus, the 443-residue chain is Thymidine phosphorylase (443 aa).

This sequence belongs to the thymidine/pyrimidine-nucleoside phosphorylase family. As to quaternary structure, homodimer.

It carries out the reaction thymidine + phosphate = 2-deoxy-alpha-D-ribose 1-phosphate + thymine. It functions in the pathway pyrimidine metabolism; dTMP biosynthesis via salvage pathway; dTMP from thymine: step 1/2. In terms of biological role, the enzymes which catalyze the reversible phosphorolysis of pyrimidine nucleosides are involved in the degradation of these compounds and in their utilization as carbon and energy sources, or in the rescue of pyrimidine bases for nucleotide synthesis. The sequence is that of Thymidine phosphorylase from Shewanella sediminis (strain HAW-EB3).